A 119-amino-acid polypeptide reads, in one-letter code: Hydrogenase maturation factor HypA (119 aa).

A Ni(2+)-binding site is contributed by His-2. Zn(2+) is bound by residues Cys-73, Cys-76, Cys-89, and Cys-92.

This sequence belongs to the HypA/HybF family.

Its function is as follows. Involved in the maturation of [NiFe] hydrogenases. Required for nickel insertion into the metal center of the hydrogenase. The sequence is that of Hydrogenase maturation factor HypA from Dehalococcoides mccartyi (strain ATCC BAA-2266 / KCTC 15142 / 195) (Dehalococcoides ethenogenes (strain 195)).